A 241-amino-acid polypeptide reads, in one-letter code: Keratin-associated protein 5-5 (241 aa).

15 repeat units span residues 35-38 (CCKP), 41-44 (CCKP), 47-50 (CCVP), 105-108 (CCKP), 115-118 (CCKP), 133-136 (CCKP), 143-146 (CCKP), 161-164 (CCKP), 171-174 (CCKP), 181-184 (CCKP), 191-194 (CCKP), 201-204 (CCKP), 211-214 (CCKP), 221-224 (CCKP), and 231-234 (CCAP). The segment at 35–234 (CCKPVCCCKP…CCCQSSCCAP (200 aa)) is 15 X 4 AA repeats of C-C-X-P.

It belongs to the KRTAP type 5 family. Interacts with hair keratins.

In terms of biological role, in the hair cortex, hair keratin intermediate filaments are embedded in an interfilamentous matrix, consisting of hair keratin-associated protein (KRTAP), which are essential for the formation of a rigid and resistant hair shaft through their extensive disulfide bond cross-linking with abundant cysteine residues of hair keratins. The matrix proteins include the high-sulfur and high-glycine-tyrosine keratins. This is Keratin-associated protein 5-5 from Mus musculus (Mouse).